The sequence spans 189 residues: Gluconokinase (189 aa).

Position 16 to 23 (16 to 23) interacts with ATP; that stretch reads GVSGAGKS.

Belongs to the gluconokinase GntK/GntV family. Monomer.

It carries out the reaction D-gluconate + ATP = 6-phospho-D-gluconate + ADP + H(+). Its pathway is carbohydrate acid metabolism; D-gluconate degradation. Functionally, phosphorylates gluconate to 6-phosphogluconate. The sequence is that of Gluconokinase from Arabidopsis thaliana (Mouse-ear cress).